Reading from the N-terminus, the 222-residue chain is 4'-phosphopantetheinyl transferase Npt (222 aa).

Asp105, Glu107, and Glu147 together coordinate Mg(2+).

This sequence belongs to the P-Pant transferase superfamily. In terms of assembly, monomer. Mg(2+) serves as cofactor.

The enzyme catalyses apo-[ACP] + CoA = holo-[ACP] + adenosine 3',5'-bisphosphate + H(+). Its function is as follows. Catalyzes the transfer of the 4'-phosphopantetheine moiety from coenzyme A to a serine residue in the acyl-carrier domain of carboxylic acid reductase Car, thus converting apo-Car to fully active holo-Car. Is probably also responsible for the activation of other proteins with phosphopantetheine attachment sites. This is 4'-phosphopantetheinyl transferase Npt (npt) from Nocardia iowensis.